The chain runs to 401 residues: Alternative oxidase, mitochondrial (401 aa).

The tract at residues 53–81 (KRASLSLQPSVREAEKSQGPVVGSEGRGV) is disordered. A helical membrane pass occupies residues 184–204 (LFRIILLESIAGVPGMVGGTL). Fe cation is bound by residues glutamate 191, glutamate 230, and histidine 233. The chain crosses the membrane as a helical span at residues 249–269 (ALVLAAQGVFYNAFFLTYLIS). Fe cation contacts are provided by glutamate 281, glutamate 282, glutamate 335, and histidine 338.

This sequence belongs to the alternative oxidase family. Requires Fe cation as cofactor.

The protein resides in the mitochondrion inner membrane. Catalyzes cyanide-resistant oxygen consumption. May increase respiration when the cytochrome respiratory pathway is restricted, or in response to low temperatures. In Cryptococcus neoformans var. grubii serotype A (strain H99 / ATCC 208821 / CBS 10515 / FGSC 9487) (Filobasidiella neoformans var. grubii), this protein is Alternative oxidase, mitochondrial (AOX1).